A 607-amino-acid polypeptide reads, in one-letter code: Rap1 GTPase-GDP dissociation stimulator 1-B (607 aa).

ARM repeat units follow at residues 79 to 118 (ELMR…NICY), 170 to 211 (DSLQ…NLAE), 347 to 390 (DGNC…NLAI), 391 to 431 (PVVN…MLID), and 479 to 519 (SKDV…LIAA).

In terms of assembly, interacts with ralB. Probably interacts with the post-translationally isoprenylated (geranyl-geranylation) forms of ral proteins. Interacts with both GDP-bound and GTP-bound forms of ralA, but interaction is much stronger with ralA-GDP.

Its subcellular location is the cytoplasm. It is found in the cytosol. The protein localises to the endoplasmic reticulum. The protein resides in the mitochondrion. Stimulates GDP/GTP exchange reaction of a group of small GTP-binding proteins (G proteins) including Rap1a/Rap1b, RhoA, RhoB and KRas, by stimulating the dissociation of GDP from and the subsequent binding of GTP to each small G protein. In Xenopus laevis (African clawed frog), this protein is Rap1 GTPase-GDP dissociation stimulator 1-B (rap1gds1-b).